The sequence spans 465 residues: Light-independent protochlorophyllide reductase subunit N (465 aa).

Residues C23, C48, and C108 each contribute to the [4Fe-4S] cluster site.

It belongs to the BchN/ChlN family. As to quaternary structure, protochlorophyllide reductase is composed of three subunits; ChlL, ChlN and ChlB. Forms a heterotetramer of two ChlB and two ChlN subunits. [4Fe-4S] cluster is required as a cofactor.

It carries out the reaction chlorophyllide a + oxidized 2[4Fe-4S]-[ferredoxin] + 2 ADP + 2 phosphate = protochlorophyllide a + reduced 2[4Fe-4S]-[ferredoxin] + 2 ATP + 2 H2O. It functions in the pathway porphyrin-containing compound metabolism; chlorophyll biosynthesis (light-independent). Its function is as follows. Component of the dark-operative protochlorophyllide reductase (DPOR) that uses Mg-ATP and reduced ferredoxin to reduce ring D of protochlorophyllide (Pchlide) to form chlorophyllide a (Chlide). This reaction is light-independent. The NB-protein (ChlN-ChlB) is the catalytic component of the complex. This Trichodesmium erythraeum (strain IMS101) protein is Light-independent protochlorophyllide reductase subunit N.